The following is a 532-amino-acid chain: Membrane protein insertase YidC (532 aa).

The next 6 helical transmembrane spans lie at I6–Y26, A317–F337, G342–L362, G411–L431, V451–M473, and P496–F516.

The protein belongs to the OXA1/ALB3/YidC family. Type 1 subfamily. As to quaternary structure, interacts with the Sec translocase complex via SecD. Specifically interacts with transmembrane segments of nascent integral membrane proteins during membrane integration.

Its subcellular location is the cell membrane. Its function is as follows. Required for the insertion and/or proper folding and/or complex formation of integral membrane proteins into the membrane. Involved in integration of membrane proteins that insert both dependently and independently of the Sec translocase complex, as well as at least some lipoproteins. Aids folding of multispanning membrane proteins. The polypeptide is Membrane protein insertase YidC (Lawsonia intracellularis (strain PHE/MN1-00)).